Here is a 567-residue protein sequence, read N- to C-terminus: Multidrug transporter TPO1_1 (567 aa).

The interval methionine 1 to glycine 71 is disordered. Residue asparagine 120 is glycosylated (N-linked (GlcNAc...) asparagine). 12 consecutive transmembrane segments (helical) span residues isoleucine 128–alanine 148, isoleucine 157–alanine 177, glycine 194–lysine 214, phenylalanine 224–methionine 244, alanine 253–serine 273, tryptophan 283–phenylalanine 303, proline 358–leucine 378, glutamate 396–phenylalanine 416, leucine 436–threonine 456, alanine 471–isoleucine 491, alanine 498–alanine 520, and tryptophan 531–leucine 551.

This sequence belongs to the major facilitator superfamily. DHA1 family. Polyamines/proton antiporter (TC 2.A.1.2.16) subfamily.

The protein localises to the cell membrane. In terms of biological role, multidrug resistance transporter involved in resistance to azole antifungal drugs such as the imidazoles miconazole, ketoconazole, and tioconazole; as well as the triazoles itraconazole and fluconazole. Also plays a role in the resistance to other antifungal drug families such as the polyene amphotericin B, the pyrimide analog flucytosine, the fungicide mancozeb, and the polyamine spermine. Decreases the intracellular accumulation of clotrimazole by mediating its extrusion from cells. Involved in virulence by conferring resistance to the human antimicrobial peptide histatin-5. In Candida glabrata (strain ATCC 2001 / BCRC 20586 / JCM 3761 / NBRC 0622 / NRRL Y-65 / CBS 138) (Yeast), this protein is Multidrug transporter TPO1_1.